The chain runs to 628 residues: Dual specificity testis-specific protein kinase 1 (628 aa).

Residues 1-35 form a disordered region; sequence MAGERPPLRGPGPGETPVEGPGGAGGGPGRGRPSS. The span at 20 to 30 shows a compositional bias: gly residues; that stretch reads GPGGAGGGPGR. A Protein kinase domain is found at 52–310; it reads FDCAEKIGAG…EITQHLEQIL (259 aa). Residues 58-66 and Lys81 each bind ATP; that span reads IGAGFFSEV. The Proton acceptor role is filled by Asp170. Position 215 is a phosphoserine; by autocatalysis (Ser215). Disordered regions lie at residues 330–376, 424–490, and 538–568; these read TYNQ…DNLT, PESL…QLPL, and RAQH…EEGL. The residue at position 338 (Arg338) is an Omega-N-methylarginine. A compositionally biased stretch (basic and acidic residues) spans 348–357; sequence SDPRLSRSRS. Residues 421–526 are required for interaction with YWHAB; it reads VASPESLVQP…NNNPPAVVVN (106 aa). Ser439 bears the Phosphoserine mark. A compositionally biased stretch (pro residues) spans 478 to 487; that stretch reads EPEPPGPAPQ. Residues 529 to 626 are required for interaction with PARVA; sequence QGWAREPWNR…PTPSLQLPGA (98 aa). The interval 529 to 628 is required for interaction with SPRED1 and SPRY2. Required for TESK1-mediated dephosphorylation of SPRY2 and SPRY2 inhibition of ERK phosphorylation; it reads QGWAREPWNR…PSLQLPGARS (100 aa).

The protein belongs to the protein kinase superfamily. TKL Ser/Thr protein kinase family. As to quaternary structure, interacts (via both C- and N-termini) with SPRY4 (via C-terminus); the interaction inhibits TESK1 kinase activity. Interacts with TAOK1; the interaction inhibits TAOK1 kinase activity. Interacts (via C-terminus) with SPRED1 (via C-terminus); the interaction inhibits TESK1 kinase activity. Interacts (via C-terminus) with PARVA/PARVIN (via C-terminus); the interaction inhibits TESK1 kinase activity. Interacts with YWHAB/14-3-3 beta; the interaction is dependent on the phosphorylation of TESK1 Ser-439 and inhibits TESK1 kinase activity. Interacts with SPRY1, SPRY3 and SPRED2. Interacts (via C-terminus) with SPRY2 (via C-terminus); the interaction disrupts SPRY2 interaction with PPP2CA/PP2A-C, possibly by vesicular sequestration of SPRY2. Therefore dephosphorylation of SPRY2 by the serine/threonine-protein phosphatase 2A (PP2A) holoenzyme is lost, inhibiting its interaction with GRB2. It depends on Mg(2+) as a cofactor. Mn(2+) is required as a cofactor. Post-translationally, autophosphorylated on serine and tyrosine residues. As to expression, weakly expressed in sciatic nerves (at protein level). Highly expressed in testicular germ cells. Expressed at low levels in brain, lung, heart, liver and kidney.

It is found in the cytoplasm. It localises to the perinuclear region. The protein resides in the cytoskeleton. Its subcellular location is the microtubule organizing center. The protein localises to the centrosome. It is found in the cell projection. It localises to the lamellipodium. The catalysed reaction is L-seryl-[protein] + ATP = O-phospho-L-seryl-[protein] + ADP + H(+). It catalyses the reaction L-threonyl-[protein] + ATP = O-phospho-L-threonyl-[protein] + ADP + H(+). It carries out the reaction L-tyrosyl-[protein] + ATP = O-phospho-L-tyrosyl-[protein] + ADP + H(+). With respect to regulation, activated by autophosphorylation on Ser-215. Kinase activity is inhibited by SPRED1. Its function is as follows. Dual specificity protein kinase activity catalyzing autophosphorylation and phosphorylation of exogenous substrates on both serine/threonine and tyrosine residues. Regulates the cellular cytoskeleton by enhancing actin stress fiber formation via phosphorylation of cofilin and by preventing microtubule breakdown via inhibition of TAOK1/MARKK kinase activity. Inhibits podocyte motility via regulation of actin cytoskeletal dynamics and phosphorylation of CFL1. Positively regulates integrin-mediated cell spreading, via phosphorylation of cofilin. Suppresses ciliogenesis via multiple pathways; phosphorylation of CFL1, suppression of ciliary vesicle directional trafficking to the ciliary base, and by facilitating YAP1 nuclear localization where it acts as a transcriptional corepressor of the TEAD4 target genes AURKA and PLK1. Probably plays a central role at and after the meiotic phase of spermatogenesis. The sequence is that of Dual specificity testis-specific protein kinase 1 (Tesk1) from Rattus norvegicus (Rat).